The chain runs to 687 residues: Ataxin-1-like (687 aa).

A compositionally biased stretch (basic and acidic residues) spans 1-19 (MKPVHERSQECLPPKKRDL). 3 disordered regions span residues 1 to 46 (MKPV…SEWS), 185 to 223 (ATPPPQAASPAQSFNKSSSATSPPGQLPHHSNTQPLDLA), and 261 to 294 (SALEAAAANGQRQRERNVRRESEALDSASSKGES). The tract at residues 20–197 (PVTSEDMGRT…PPQAASPAQS (178 aa)) is interaction with NCOR2 and ATXN1. The tract at residues 20 to 197 (PVTSEDMGRT…PPQAASPAQS (178 aa)) is self-association. 2 stretches are compositionally biased toward polar residues: residues 28–43 (RTTSCSTNHTPSSDAS) and 198–219 (FNKSSSATSPPGQLPHHSNTQP). Positions 272 to 283 (RQRERNVRRESE) are enriched in basic and acidic residues. Phosphoserine is present on S282. Phosphothreonine is present on T328. The tract at residues 356–379 (DEPSPLNLSHHNLDHQGEGRGSAR) is disordered. At S359 the chain carries Phosphoserine. Residues 455-586 (PPPVTSSHLP…SISLQSLNSN (132 aa)) form the AXH domain. The disordered stretch occupies residues 587–649 (SVSQASCAPP…PGAQACWPAP (63 aa)).

Belongs to the ATXN1 family. As to quaternary structure, homodimer. Interacts (via AXH domain) with NCOR2. Interacts with ATXN1 and CIC. Directly interacts with RBPJ; this interaction is disrupted in the presence of Notch intracellular domain. Competes with ATXN1 for RBPJ-binding. Found in a complex with CIC and ATXN1. In terms of tissue distribution, expressed in the cortex and hypothalamus (at protein level). Expressed in neuronal cells. Highly expressed in Purkinje cells of cerebellum.

It localises to the nucleus. The protein resides in the cell projection. It is found in the dendrite. In terms of biological role, chromatin-binding factor that repress Notch signaling in the absence of Notch intracellular domain by acting as a CBF1 corepressor. Binds to the HEY promoter and might assist, along with NCOR2, RBPJ-mediated repression. Can suppress the cytotoxicity of ATXN1 in spinocerebellar ataxia type 1 (SCA1). In concert with CIC and ATXN1, involved in brain development. The chain is Ataxin-1-like (Atxn1l) from Mus musculus (Mouse).